The chain runs to 193 residues: MSSCRVDKPSEIVDVGDKVWVKLIGREMKNDRIKVSLSMKVVNQGTGKDLDPNNVIIEQEERRRRSFQDYTGQKITLEAVLNTTCKKCGCKGHFAKDCFMQPGGTKYSLIPDEEEEKEEAKSAEFEKPVPTRNPSRKRKKEKKKKKHRDRKSSDSDSSDSESDTGKRARHTSKDSKAAKKKKKKKKHKKKHKE.

The 40-residue stretch at 1–40 (MSSCRVDKPSEIVDVGDKVWVKLIGREMKNDRIKVSLSMK) folds into the S1 motif; truncated domain. Ser66 carries the phosphoserine modification. The CCHC-type zinc-finger motif lies at 83-100 (TTCKKCGCKGHFAKDCFM). Lys96 is subject to N6-acetyllysine. The segment at 113–193 (EEEEKEEAKS…KKKHKKKHKE (81 aa)) is disordered. A compositionally biased stretch (basic and acidic residues) spans 118–129 (EEAKSAEFEKPV). Residues 134–150 (PSRKRKKEKKKKKHRDR) are compositionally biased toward basic residues. Ser135 is modified (phosphoserine). Basic and acidic residues predominate over residues 163–177 (DTGKRARHTSKDSKA). Over residues 178 to 193 (AKKKKKKKKHKKKHKE) the composition is skewed to basic residues.

As to quaternary structure, may interact with PNN. May associate with the 60 S ribosomal subunit.

The protein resides in the nucleus. Its subcellular location is the nucleolus. The protein is Zinc finger CCHC domain-containing protein 17 (ZCCHC17) of Macaca fascicularis (Crab-eating macaque).